The primary structure comprises 82 residues: Small ribosomal subunit protein uS17 (82 aa).

The protein belongs to the universal ribosomal protein uS17 family. As to quaternary structure, part of the 30S ribosomal subunit.

Its function is as follows. One of the primary rRNA binding proteins, it binds specifically to the 5'-end of 16S ribosomal RNA. In Shewanella sp. (strain MR-7), this protein is Small ribosomal subunit protein uS17.